Reading from the N-terminus, the 306-residue chain is Pantothenate kinase (306 aa).

91–98 (GSVAVGKS) is a binding site for ATP.

Belongs to the prokaryotic pantothenate kinase family.

It localises to the cytoplasm. It carries out the reaction (R)-pantothenate + ATP = (R)-4'-phosphopantothenate + ADP + H(+). The protein operates within cofactor biosynthesis; coenzyme A biosynthesis; CoA from (R)-pantothenate: step 1/5. The chain is Pantothenate kinase from Streptococcus equi subsp. zooepidemicus (strain MGCS10565).